The sequence spans 359 residues: tRNA N6-adenosine threonylcarbamoyltransferase (359 aa).

Fe cation is bound by residues H121 and H125. Residues 143 to 147 (LVSGG), D176, G189, and N286 contribute to the substrate site. D311 is a Fe cation binding site.

It belongs to the KAE1 / TsaD family. Fe(2+) is required as a cofactor.

Its subcellular location is the cytoplasm. The catalysed reaction is L-threonylcarbamoyladenylate + adenosine(37) in tRNA = N(6)-L-threonylcarbamoyladenosine(37) in tRNA + AMP + H(+). Its function is as follows. Required for the formation of a threonylcarbamoyl group on adenosine at position 37 (t(6)A37) in tRNAs that read codons beginning with adenine. Is involved in the transfer of the threonylcarbamoyl moiety of threonylcarbamoyl-AMP (TC-AMP) to the N6 group of A37, together with TsaE and TsaB. TsaD likely plays a direct catalytic role in this reaction. The protein is tRNA N6-adenosine threonylcarbamoyltransferase of Jannaschia sp. (strain CCS1).